The primary structure comprises 85 residues: Protein C4 (85 aa).

The N-myristoyl glycine; by host moiety is linked to residue Gly-2. A disordered region spans residues Leu-42 to Arg-65. Over residues Pro-44–Ser-59 the composition is skewed to low complexity.

This sequence belongs to the geminiviridae protein AC4/C4 family.

Its subcellular location is the host cell membrane. Functionally, pathogenicity determinant. May act as a suppressor of RNA-mediated gene silencing, also known as post-transcriptional gene silencing (PTGS), a mechanism of plant viral defense that limits the accumulation of viral RNAs. The polypeptide is Protein C4 (Solanum lycopersicum (Tomato)).